The sequence spans 299 residues: Acetaldehyde dehydrogenase (299 aa).

Catalysis depends on cysteine 126, which acts as the Acyl-thioester intermediate. NAD(+) contacts are provided by residues 157–165 and asparagine 267; that span reads SAGPGTRQN.

The protein belongs to the acetaldehyde dehydrogenase family.

The catalysed reaction is acetaldehyde + NAD(+) + CoA = acetyl-CoA + NADH + H(+). The chain is Acetaldehyde dehydrogenase (mhpF) from Carboxydothermus hydrogenoformans (strain ATCC BAA-161 / DSM 6008 / Z-2901).